The following is a 447-amino-acid chain: Tubulin beta chain (447 aa).

GTP contacts are provided by Q11, E69, S138, G142, T143, G144, N204, and N226. E69 serves as a coordination point for Mg(2+). The interval 425–447 is disordered; that stretch reads YQEASISEGEEEYDEEAPLEAEE. Positions 432–447 are enriched in acidic residues; sequence EGEEEYDEEAPLEAEE.

It belongs to the tubulin family. Dimer of alpha and beta chains. A typical microtubule is a hollow water-filled tube with an outer diameter of 25 nm and an inner diameter of 15 nM. Alpha-beta heterodimers associate head-to-tail to form protofilaments running lengthwise along the microtubule wall with the beta-tubulin subunit facing the microtubule plus end conferring a structural polarity. Microtubules usually have 13 protofilaments but different protofilament numbers can be found in some organisms and specialized cells. Mg(2+) is required as a cofactor.

The protein resides in the cytoplasm. It localises to the cytoskeleton. In terms of biological role, tubulin is the major constituent of microtubules, a cylinder consisting of laterally associated linear protofilaments composed of alpha- and beta-tubulin heterodimers. Microtubules grow by the addition of GTP-tubulin dimers to the microtubule end, where a stabilizing cap forms. Below the cap, tubulin dimers are in GDP-bound state, owing to GTPase activity of alpha-tubulin. This Phaeosphaeria nodorum (strain SN15 / ATCC MYA-4574 / FGSC 10173) (Glume blotch fungus) protein is Tubulin beta chain (tubB).